Here is a 35-residue protein sequence, read N- to C-terminus: Coenzyme PQQ synthesis protein A (35 aa).

Residues 16-20 constitute a cross-link (pyrroloquinoline quinone (Glu-Tyr)); it reads EINMY.

The protein belongs to the PqqA family.

Its pathway is cofactor biosynthesis; pyrroloquinoline quinone biosynthesis. Required for coenzyme pyrroloquinoline quinone (PQQ) biosynthesis. PQQ is probably formed by cross-linking a specific glutamate to a specific tyrosine residue and excising these residues from the peptide. This Ruegeria pomeroyi (strain ATCC 700808 / DSM 15171 / DSS-3) (Silicibacter pomeroyi) protein is Coenzyme PQQ synthesis protein A.